The sequence spans 270 residues: Tryptophan synthase alpha chain (270 aa).

Active-site proton acceptor residues include Glu49 and Asp60.

This sequence belongs to the TrpA family. Tetramer of two alpha and two beta chains.

The enzyme catalyses (1S,2R)-1-C-(indol-3-yl)glycerol 3-phosphate + L-serine = D-glyceraldehyde 3-phosphate + L-tryptophan + H2O. It participates in amino-acid biosynthesis; L-tryptophan biosynthesis; L-tryptophan from chorismate: step 5/5. In terms of biological role, the alpha subunit is responsible for the aldol cleavage of indoleglycerol phosphate to indole and glyceraldehyde 3-phosphate. This Pseudomonas fluorescens (strain Pf0-1) protein is Tryptophan synthase alpha chain.